The chain runs to 147 residues: Hemoglobin subunit beta (147 aa).

V2 bears the N-acetylvaline mark. The region spanning 3–147 (HLTPEEKSAV…VANALAHKYH (145 aa)) is the Globin domain. The residue at position 13 (T13) is a Phosphothreonine. The residue at position 45 (S45) is a Phosphoserine. K60 is modified (N6-acetyllysine). Position 64 (H64) interacts with heme b. N6-acetyllysine is present on K83. Heme b is bound at residue H93. C94 carries the S-nitrosocysteine modification. N6-acetyllysine is present on K145.

This sequence belongs to the globin family. As to quaternary structure, heterotetramer of two alpha chains and two beta chains. Red blood cells.

In terms of biological role, involved in oxygen transport from the lung to the various peripheral tissues. The polypeptide is Hemoglobin subunit beta (HBB) (Gorilla gorilla gorilla (Western lowland gorilla)).